Consider the following 253-residue polypeptide: GTP cyclohydrolase III 2 (253 aa).

The interval 102-125 (LRDAGSAQDENRQEALSHRSPPGF) is disordered.

It belongs to the archaeal-type GTP cyclohydrolase family.

The catalysed reaction is GTP + 3 H2O = 2-amino-5-formylamino-6-(5-phospho-D-ribosylamino)pyrimidin-4(3H)-one + 2 phosphate + 2 H(+). Catalyzes the formation of 2-amino-5-formylamino-6-ribofuranosylamino-4(3H)-pyrimidinone ribonucleotide monophosphate and inorganic phosphate from GTP. Also has an independent pyrophosphate phosphohydrolase activity. The protein is GTP cyclohydrolase III 2 (gch32) of Halobacterium salinarum (strain ATCC 700922 / JCM 11081 / NRC-1) (Halobacterium halobium).